Reading from the N-terminus, the 595-residue chain is Sialic acid-binding Ig-like lectin 12 (595 aa).

Residues 1–18 (MLLLLLLLPPLLCGRVGA) form the signal peptide. Ig-like V-type domains lie at 19–142 (KEQK…VNVT) and 143–269 (ASQD…VHVT). Over 19-481 (KEQKDYLLTM…RPISGVTLGA (463 aa)) the chain is Extracellular. C44 and C104 form a disulfide bridge. 4 N-linked (GlcNAc...) asparagine glycosylation sites follow: N140, N179, N230, and N290. Cystine bridges form between C166–C299, C171–C231, and C293–C342. The Ig-like C2-type 1 domain maps to 275 to 358 (PTFSIPGTLE…AGVTMTRAVR (84 aa)). N-linked (GlcNAc...) asparagine glycosylation is found at N360, N367, and N385. The Ig-like C2-type 2 domain occupies 365-462 (PQNLTMTVFQ…GSQHISLSLS (98 aa)). Cysteines 401 and 446 form a disulfide. Residues 482–502 (FGGAGATALVFLYFCIIFVVV) traverse the membrane as a helical segment. At 503-595 (RSCRKKSARP…YEYSEINIPK (93 aa)) the chain is on the cytoplasmic side. A disordered region spans residues 512-560 (PAVGVGDTGMEDANAVRGSASQGPLIESPADDSPPHHAPPALATPSPEE). The ITIM motif signature appears at 563 to 568 (IQYASL). Residues Y565 and Y588 each carry the phosphotyrosine modification. The short motif at 586–591 (YEYSEI) is the SLAM-like motif element.

It belongs to the immunoglobulin superfamily. SIGLEC (sialic acid binding Ig-like lectin) family. As to expression, isoform Short is highly expressed in spleen, small intestine and adrenal gland; it is lower expressed in thyroid, placenta, brain, stomach, bone marrow, spinal cord and breast. Isoform Long is highly expressed in spleen, small intestine and bone marrow; it is lower expressed in thyroid, placenta, thymus, trachea, stomach, lung, adrenal gland, fetal brain and testis.

It is found in the membrane. Functionally, putative adhesion molecule that mediates sialic-acid dependent binding to cells. The sialic acid recognition site may be masked by cis interactions with sialic acids on the same cell surface. The sequence is that of Sialic acid-binding Ig-like lectin 12 (SIGLEC12) from Homo sapiens (Human).